The chain runs to 145 residues: Granulysin (145 aa).

An N-terminal signal peptide occupies residues 1-22 (MATWALLLLAAMLLGNPGLVFS). Residues 62–142 (LGRDYRTCLT…EDLRLCIPST (81 aa)) form the Saposin B-type domain. Disulfide bonds link Cys69-Cys132 and Cys96-Cys107.

In terms of processing, a 9 kDa form is produced by proteolytic processing of a 15 kDa protein. As to expression, expressed in natural killer and T-cells.

It is found in the secreted. Its function is as follows. Antimicrobial protein that kills intracellular pathogens. Active against a broad range of microbes, including Gram-positive and Gram-negative bacteria, fungi, and parasites. Kills Mycobacterium tuberculosis. The polypeptide is Granulysin (GNLY) (Homo sapiens (Human)).